Consider the following 581-residue polypeptide: Arginine--tRNA ligase (581 aa).

A 'HIGH' region motif is present at residues 126 to 136; sequence PNLAKEMHVGH.

Belongs to the class-I aminoacyl-tRNA synthetase family. Monomer.

The protein localises to the cytoplasm. The enzyme catalyses tRNA(Arg) + L-arginine + ATP = L-arginyl-tRNA(Arg) + AMP + diphosphate. In Shewanella oneidensis (strain ATCC 700550 / JCM 31522 / CIP 106686 / LMG 19005 / NCIMB 14063 / MR-1), this protein is Arginine--tRNA ligase.